The primary structure comprises 77 residues: MPHIDIKCFPRELDEQQKAALAADITDVIIRHLNSKDSSISIALQQIQPESWQAIWDAEIAPQMEALIKKPGYSMNA.

The active-site Proton acceptor; via imino nitrogen is P2.

It belongs to the 4-oxalocrotonate tautomerase family. PptA subfamily. In terms of assembly, homodimer.

It localises to the cytoplasm. The chain is Tautomerase PptA from Escherichia coli (strain K12 / MC4100 / BW2952).